Consider the following 335-residue polypeptide: Beta-ketoacyl-[acyl-carrier-protein] synthase III (335 aa).

Catalysis depends on residues Cys-118 and His-259. The ACP-binding stretch occupies residues 260–264; the sequence is QANER. Asn-289 is an active-site residue.

The protein belongs to the thiolase-like superfamily. FabH family. In terms of assembly, homodimer.

The protein localises to the cytoplasm. The enzyme catalyses malonyl-[ACP] + acetyl-CoA + H(+) = 3-oxobutanoyl-[ACP] + CO2 + CoA. It functions in the pathway lipid metabolism; fatty acid biosynthesis. Functionally, catalyzes the condensation reaction of fatty acid synthesis by the addition to an acyl acceptor of two carbons from malonyl-ACP. Catalyzes the first condensation reaction which initiates fatty acid synthesis and may therefore play a role in governing the total rate of fatty acid production. Possesses both acetoacetyl-ACP synthase and acetyl transacylase activities. Its substrate specificity determines the biosynthesis of branched-chain and/or straight-chain of fatty acids. This is Beta-ketoacyl-[acyl-carrier-protein] synthase III from Chlamydia caviae (strain ATCC VR-813 / DSM 19441 / 03DC25 / GPIC) (Chlamydophila caviae).